A 461-amino-acid polypeptide reads, in one-letter code: Glyceraldehyde-3-phosphate dehydrogenase-like protein (461 aa).

A Phosphothreonine modification is found at Thr-421.

This sequence belongs to the glyceraldehyde-3-phosphate dehydrogenase family.

The polypeptide is Glyceraldehyde-3-phosphate dehydrogenase-like protein (gap2) (Pseudomonas aeruginosa (strain UCBPP-PA14)).